The following is a 214-amino-acid chain: Holliday junction branch migration complex subunit RuvA (214 aa).

Residues 1–63 (MIASLSGTVE…EDALTLYGFA (63 aa)) form a domain I region. Residues 64-142 (DRDEREVFEV…PTGEPVPGAE (79 aa)) form a domain II region. The interval 143–151 (AEASDEPAV) is flexible linker. Positions 151–214 (VETVWHADVV…GMAGAVRGGR (64 aa)) are domain III.

It belongs to the RuvA family. As to quaternary structure, homotetramer. Forms an RuvA(8)-RuvB(12)-Holliday junction (HJ) complex. HJ DNA is sandwiched between 2 RuvA tetramers; dsDNA enters through RuvA and exits via RuvB. An RuvB hexamer assembles on each DNA strand where it exits the tetramer. Each RuvB hexamer is contacted by two RuvA subunits (via domain III) on 2 adjacent RuvB subunits; this complex drives branch migration. In the full resolvosome a probable DNA-RuvA(4)-RuvB(12)-RuvC(2) complex forms which resolves the HJ.

The protein localises to the cytoplasm. Functionally, the RuvA-RuvB-RuvC complex processes Holliday junction (HJ) DNA during genetic recombination and DNA repair, while the RuvA-RuvB complex plays an important role in the rescue of blocked DNA replication forks via replication fork reversal (RFR). RuvA specifically binds to HJ cruciform DNA, conferring on it an open structure. The RuvB hexamer acts as an ATP-dependent pump, pulling dsDNA into and through the RuvAB complex. HJ branch migration allows RuvC to scan DNA until it finds its consensus sequence, where it cleaves and resolves the cruciform DNA. The chain is Holliday junction branch migration complex subunit RuvA from Micrococcus luteus (strain ATCC 4698 / DSM 20030 / JCM 1464 / CCM 169 / CCUG 5858 / IAM 1056 / NBRC 3333 / NCIMB 9278 / NCTC 2665 / VKM Ac-2230) (Micrococcus lysodeikticus).